Reading from the N-terminus, the 905-residue chain is Protein translocase subunit SecA (905 aa).

ATP contacts are provided by residues Gln-87, 105–109 (GEGKT), and Asp-512. The tract at residues 565–584 (RRIDNQLRGRSGRQGDPGSS) is disordered. Residues Cys-886, Cys-888, Cys-897, and His-898 each coordinate Zn(2+).

This sequence belongs to the SecA family. In terms of assembly, monomer and homodimer. Part of the essential Sec protein translocation apparatus which comprises SecA, SecYEG and auxiliary proteins SecDF-YajC and YidC. Zn(2+) serves as cofactor.

The protein resides in the cell inner membrane. Its subcellular location is the cytoplasm. The enzyme catalyses ATP + H2O + cellular proteinSide 1 = ADP + phosphate + cellular proteinSide 2.. Part of the Sec protein translocase complex. Interacts with the SecYEG preprotein conducting channel. Has a central role in coupling the hydrolysis of ATP to the transfer of proteins into and across the cell membrane, serving both as a receptor for the preprotein-SecB complex and as an ATP-driven molecular motor driving the stepwise translocation of polypeptide chains across the membrane. The sequence is that of Protein translocase subunit SecA from Haemophilus ducreyi (strain 35000HP / ATCC 700724).